We begin with the raw amino-acid sequence, 465 residues long: ATP synthase subunit beta (465 aa).

154–161 lines the ATP pocket; the sequence is GGAGVGKT.

This sequence belongs to the ATPase alpha/beta chains family. F-type ATPases have 2 components, CF(1) - the catalytic core - and CF(0) - the membrane proton channel. CF(1) has five subunits: alpha(3), beta(3), gamma(1), delta(1), epsilon(1). CF(0) has three main subunits: a(1), b(2) and c(9-12). The alpha and beta chains form an alternating ring which encloses part of the gamma chain. CF(1) is attached to CF(0) by a central stalk formed by the gamma and epsilon chains, while a peripheral stalk is formed by the delta and b chains.

Its subcellular location is the cell inner membrane. It carries out the reaction ATP + H2O + 4 H(+)(in) = ADP + phosphate + 5 H(+)(out). Produces ATP from ADP in the presence of a proton gradient across the membrane. The catalytic sites are hosted primarily by the beta subunits. This chain is ATP synthase subunit beta, found in Methylobacillus flagellatus (strain ATCC 51484 / DSM 6875 / VKM B-1610 / KT).